Consider the following 888-residue polypeptide: Glutamate receptor 3 (888 aa).

An N-terminal signal peptide occupies residues 1-22; sequence MGQSVLRAVFFLVLGLLGHSHG. Residues 23–546 are Extracellular-facing; it reads GFPNTISIGG…GVFSFLDPLA (524 aa). N-linked (GlcNAc...) asparagine glycosylation is found at Asn57, Asn260, Asn374, Asn409, and Asn416. Residues Cys85 and Cys334 are joined by a disulfide bond. L-glutamate-binding residues include Pro502, Thr504, and Arg509. The helical transmembrane segment at 547–567 threads the bilayer; it reads YEIWMCIVFAYIGVSVVLFLV. The Cytoplasmic portion of the chain corresponds to 568–596; the sequence is SRFSPYEWHLEDNNEEPRDPQSPPDPPNE. The segment at residues 597-612 is an intramembrane region (helical; Pore-forming); it reads FGIFNSLWFSLGAFMQ. An intramembrane segment occupies 613–615; it reads QGC. A lipid anchor (S-palmitoyl cysteine) is attached at Cys615. Residues 616–621 are Cytoplasmic-facing; sequence DISPRS. A helical transmembrane segment spans residues 622-642; it reads LSGRIVGGVWWFFTLIIISSY. Over 643-817 the chain is Extracellular; sequence TANLAAFLTV…DKTSALSLSN (175 aa). Positions 680, 681, and 731 each coordinate L-glutamate. Residues Cys744 and Cys799 are joined by a disulfide bond. A helical membrane pass occupies residues 818–838; it reads VAGVFYILVGGLGLAMMVALI. At 839–888 the chain is on the cytoplasmic side; it reads EFCYKSRAESKRMKLTKNTQNFKPAPATNTQNYATYREGYNVYGTESVKI. Cys841 is lipidated: S-palmitoyl cysteine. 2 positions are modified to phosphotyrosine: Tyr871 and Tyr881.

This sequence belongs to the glutamate-gated ion channel (TC 1.A.10.1) family. GRIA3 subfamily. Homotetramer or heterotetramer of pore-forming glutamate receptor subunits. Tetramers may be formed by the dimerization of dimers. Interacts with PICK1, GRIP1 and GRIP2. Found in a complex with GRIA1, GRIA2, GRIA4, CNIH2, CNIH3, CACNG2, CACNG3, CACNG4, CACNG5, CACNG7 and CACNG8. Interacts with CACNG5. Found in a complex with GRIA1, GRIA2, GRIA4, DLG4, CACNG8 and CNIH2.

It localises to the cell membrane. The protein localises to the postsynaptic cell membrane. Its subcellular location is the postsynaptic density membrane. The enzyme catalyses Ca(2+)(in) = Ca(2+)(out). Functionally, ionotropic glutamate receptor that functions as a ligand-gated cation channel, gated by L-glutamate and glutamatergic agonists such as alpha-amino-3-hydroxy-5-methyl-4-isoxazolepropionic acid (AMPA), quisqualic acid, and kainic acid. L-glutamate acts as an excitatory neurotransmitter at many synapses in the central nervous system and plays an important role in fast excitatory synaptic transmission by inducing long-term potentiation. Binding of the excitatory neurotransmitter L-glutamate induces a conformation change, leading to the opening of the cation channel, and thereby converts the chemical signal to an electrical impulse upon entry of calcium. The receptor then desensitizes rapidly and enters a transient inactive state, characterized by the presence of bound agonist. In the presence of CACNG8, shows resensitization which is characterized by a delayed accumulation of current flux upon continued application of glutamate. This Mus musculus (Mouse) protein is Glutamate receptor 3.